We begin with the raw amino-acid sequence, 439 residues long: Acetyl esterase Axe7A (439 aa).

A signal peptide spans 1–31 (MFNFAPKQTTEMKKLLFTLVFVLGSMATALA). Ser-309 (nucleophile) is an active-site residue. Catalysis depends on charge relay system residues Asp-391 and His-420.

The protein belongs to the carbohydrate esterase 7 family.

The protein operates within glycan degradation; xylan degradation. Its function is as follows. Involved in degradation of plant cell wall polysaccharides. Has acetyl esterase activity towards a broad range of substrates including xylose-tetraacetate, 4-O-methylumbelliferyl acetate, glucose-pentaacetate, cephalosporin C, and acetylated xylo-oligosaccharides smaller than xylo-heptaose. Displays no detectable activity on polymeric acetylated xylan. This Xylanibacter ruminicola (strain ATCC 19189 / DSM 19721 / CIP 105475 / JCM 8958 / 23) (Prevotella ruminicola) protein is Acetyl esterase Axe7A.